Consider the following 217-residue polypeptide: 3,4-dihydroxy-2-butanone 4-phosphate synthase (217 aa).

D-ribulose 5-phosphate contacts are provided by residues 40 to 41 (RE), Asp45, 153 to 157 (RRGHT), and Glu177. A Mg(2+)-binding site is contributed by Glu41. His156 serves as a coordination point for Mg(2+).

The protein belongs to the DHBP synthase family. As to quaternary structure, homodimer. It depends on Mg(2+) as a cofactor. Requires Mn(2+) as cofactor.

The catalysed reaction is D-ribulose 5-phosphate = (2S)-2-hydroxy-3-oxobutyl phosphate + formate + H(+). It participates in cofactor biosynthesis; riboflavin biosynthesis; 2-hydroxy-3-oxobutyl phosphate from D-ribulose 5-phosphate: step 1/1. Functionally, catalyzes the conversion of D-ribulose 5-phosphate to formate and 3,4-dihydroxy-2-butanone 4-phosphate. In Aliivibrio fischeri (Vibrio fischeri), this protein is 3,4-dihydroxy-2-butanone 4-phosphate synthase.